The chain runs to 896 residues: Phycobiliprotein ApcE (896 aa).

Residue cysteine 190 coordinates (2R,3E)-phycocyanobilin. PBS-linker domains are found at residues 247-427 (DIQG…FRKV), 508-684 (LGAK…QRVD), and 703-881 (EPEI…KQDK).

It belongs to the phycobilisome linker protein family. In terms of assembly, heterodimer of ApcF (a variant beta-allophycocyanin). Phycobilisomes of this organism are composed of a two cylinder core, from which six rods radiate. The core is mainly composed of allophycocyanin alpha and beta chains and of minor components. Contains one covalently linked bilin chromophore. This protein autochromophorylates.

It localises to the cellular thylakoid membrane. Its function is as follows. This protein is postulated to act both as terminal energy acceptor (by its phycobilin-like domains) and as a linker polypeptide (by its repeats and arms) that stabilizes the phycobilisome core architecture. Has intrinsic bilin lyase activity. The chain is Phycobiliprotein ApcE (apcE) from Synechocystis sp. (strain ATCC 27184 / PCC 6803 / Kazusa).